Reading from the N-terminus, the 104-residue chain is Large ribosomal subunit protein uL24 (104 aa).

The protein belongs to the universal ribosomal protein uL24 family. As to quaternary structure, part of the 50S ribosomal subunit.

Functionally, one of two assembly initiator proteins, it binds directly to the 5'-end of the 23S rRNA, where it nucleates assembly of the 50S subunit. Its function is as follows. One of the proteins that surrounds the polypeptide exit tunnel on the outside of the subunit. The sequence is that of Large ribosomal subunit protein uL24 from Rhodopseudomonas palustris (strain BisA53).